Consider the following 1209-residue polypeptide: Sterol 3-beta-glucosyltransferase (1209 aa).

Residues 167 to 217 (ERLIKKFLPNDDEKYIEEYPCWLLRDIMIQGHAYLTNKHLFFFAFIPNFES) enclose the GRAM 1 domain. Positions 218–315 (DFNVTGSLRL…WVSSIKKQMF (98 aa)) constitute a PH domain. The 67-residue stretch at 568-634 (VRFRQHFSFD…EDVENCYKET (67 aa)) folds into the GRAM 2 domain. UDP-alpha-D-glucose-binding residues include S745, R746, D748, N1019, V1048, H1050, H1063, S1066, G1067, T1068, D1087, and Q1088. Residues 1186–1209 (AKGNEKEEYSSEGSGSNDGSWLLI) form a disordered region. Positions 1196–1209 (SEGSGSNDGSWLLI) are enriched in low complexity.

It belongs to the glycosyltransferase 28 family.

It is found in the cytoplasm. The protein resides in the membrane. It carries out the reaction a sterol + UDP-alpha-D-glucose = a sterol 3-beta-D-glucoside + UDP + H(+). The catalysed reaction is ergosterol + UDP-alpha-D-glucose = ergosteryl 3-beta-D-glucoside + UDP + H(+). Its function is as follows. Sterol glycosyltransferase responsible for the glycosylation of ergosterol to form ergosterol-glucoside. This is Sterol 3-beta-glucosyltransferase from Kluyveromyces lactis (strain ATCC 8585 / CBS 2359 / DSM 70799 / NBRC 1267 / NRRL Y-1140 / WM37) (Yeast).